We begin with the raw amino-acid sequence, 264 residues long: Thymidylate synthase (264 aa).

Position 21 (Arg21) interacts with dUMP. Residue His51 coordinates (6R)-5,10-methylene-5,6,7,8-tetrahydrofolate. 126 to 127 (RR) lines the dUMP pocket. The active-site Nucleophile is the Cys146. Residues 166–169 (RSAD), Asn177, and 207–209 (HLY) each bind dUMP. Asp169 provides a ligand contact to (6R)-5,10-methylene-5,6,7,8-tetrahydrofolate. Ser263 serves as a coordination point for (6R)-5,10-methylene-5,6,7,8-tetrahydrofolate.

The protein belongs to the thymidylate synthase family. Bacterial-type ThyA subfamily. In terms of assembly, homodimer.

It localises to the cytoplasm. The catalysed reaction is dUMP + (6R)-5,10-methylene-5,6,7,8-tetrahydrofolate = 7,8-dihydrofolate + dTMP. It functions in the pathway pyrimidine metabolism; dTTP biosynthesis. Functionally, catalyzes the reductive methylation of 2'-deoxyuridine-5'-monophosphate (dUMP) to 2'-deoxythymidine-5'-monophosphate (dTMP) while utilizing 5,10-methylenetetrahydrofolate (mTHF) as the methyl donor and reductant in the reaction, yielding dihydrofolate (DHF) as a by-product. This enzymatic reaction provides an intracellular de novo source of dTMP, an essential precursor for DNA biosynthesis. The protein is Thymidylate synthase of Neisseria gonorrhoeae (strain ATCC 700825 / FA 1090).